We begin with the raw amino-acid sequence, 270 residues long: Cytochrome c oxidase subunit 3 (270 aa).

The next 7 helical transmembrane spans lie at 21–41 (PWPF…VLYF), 46–66 (GSLV…FVWW), 90–110 (GIML…WAFF), 131–151 (FFSP…SGCA), 167–187 (AIFS…FQIY), 205–225 (FFMI…FLFV), and 248–268 (WYWH…YWWG).

Belongs to the cytochrome c oxidase subunit 3 family. In terms of assembly, component of the cytochrome c oxidase (complex IV, CIV), a multisubunit enzyme composed of a catalytic core of 3 subunits and several supernumerary subunits. The complex exists as a monomer or a dimer and forms supercomplexes (SCs) in the inner mitochondrial membrane with ubiquinol-cytochrome c oxidoreductase (cytochrome b-c1 complex, complex III, CIII).

Its subcellular location is the mitochondrion inner membrane. The catalysed reaction is 4 Fe(II)-[cytochrome c] + O2 + 8 H(+)(in) = 4 Fe(III)-[cytochrome c] + 2 H2O + 4 H(+)(out). Functionally, component of the cytochrome c oxidase, the last enzyme in the mitochondrial electron transport chain which drives oxidative phosphorylation. The respiratory chain contains 3 multisubunit complexes succinate dehydrogenase (complex II, CII), ubiquinol-cytochrome c oxidoreductase (cytochrome b-c1 complex, complex III, CIII) and cytochrome c oxidase (complex IV, CIV), that cooperate to transfer electrons derived from NADH and succinate to molecular oxygen, creating an electrochemical gradient over the inner membrane that drives transmembrane transport and the ATP synthase. Cytochrome c oxidase is the component of the respiratory chain that catalyzes the reduction of oxygen to water. Electrons originating from reduced cytochrome c in the intermembrane space (IMS) are transferred via the dinuclear copper A center (CU(A)) of subunit 2 and heme A of subunit 1 to the active site in subunit 1, a binuclear center (BNC) formed by heme A3 and copper B (CU(B)). The BNC reduces molecular oxygen to 2 water molecules using 4 electrons from cytochrome c in the IMS and 4 protons from the mitochondrial matrix. This chain is Cytochrome c oxidase subunit 3 (COX3), found in Cyanidium caldarium (Red alga).